Reading from the N-terminus, the 693-residue chain is Oxysterol-binding protein-related protein 2B (693 aa).

Over residues 1 to 15 the composition is skewed to polar residues; that stretch reads MPLTRSKSLPATENG. The tract at residues 1–22 is disordered; it reads MPLTRSKSLPATENGGSDRETL. The PH domain occupies 25-154; that stretch reads GRSVAGILYK…WLQALASTRG (130 aa). Residues 207–239 adopt a coiled-coil conformation; sequence EVQEQIKLLHEERKKLLDALRQLEMANLEAEAS. 2 disordered regions span residues 256-298 and 600-639; these read LGRG…GEPD and EKLP…RMSR. Residues 274–284 are compositionally biased toward acidic residues; it reads QEFEDISEEDE. 2 stretches are compositionally biased toward basic and acidic residues: residues 285–294 and 600–635; these read ASFHDTKESF and EKLP…ERRQ. Residues 612–643 adopt a coiled-coil conformation; it reads DQRHLENGEYEKANEEKQRLERRQRMSRQIQE.

The protein belongs to the OSBP family. As to expression, expressed in roots, leaves, stems and flowers.

Its function is as follows. May be involved in the transport of sterols. In Arabidopsis thaliana (Mouse-ear cress), this protein is Oxysterol-binding protein-related protein 2B (ORP2B).